Reading from the N-terminus, the 188-residue chain is Elongation factor P (188 aa).

This sequence belongs to the elongation factor P family.

The protein localises to the cytoplasm. It functions in the pathway protein biosynthesis; polypeptide chain elongation. Functionally, involved in peptide bond synthesis. Stimulates efficient translation and peptide-bond synthesis on native or reconstituted 70S ribosomes in vitro. Probably functions indirectly by altering the affinity of the ribosome for aminoacyl-tRNA, thus increasing their reactivity as acceptors for peptidyl transferase. This chain is Elongation factor P, found in Nitrobacter hamburgensis (strain DSM 10229 / NCIMB 13809 / X14).